We begin with the raw amino-acid sequence, 150 residues long: UPF0178 protein ECA0873 (150 aa).

Belongs to the UPF0178 family.

In Pectobacterium atrosepticum (strain SCRI 1043 / ATCC BAA-672) (Erwinia carotovora subsp. atroseptica), this protein is UPF0178 protein ECA0873.